Reading from the N-terminus, the 163-residue chain is Transcriptional repressor NrdR (163 aa).

Residues 3 to 34 (CPFCAHPEDKVVDSRESKEGESIRRRRECLKC) fold into a zinc finger. An ATP-cone domain is found at 49 to 139 (YMVVKKDGRR…VYLDFKDVRE (91 aa)).

The protein belongs to the NrdR family. It depends on Zn(2+) as a cofactor.

Negatively regulates transcription of bacterial ribonucleotide reductase nrd genes and operons by binding to NrdR-boxes. The sequence is that of Transcriptional repressor NrdR from Koribacter versatilis (strain Ellin345).